The primary structure comprises 42 residues: Photosystem I reaction center subunit IX (42 aa).

A helical transmembrane segment spans residues 7-27; that stretch reads YLSTAPVLSALWFAILAGLLI.

It belongs to the PsaJ family.

It is found in the plastid. The protein resides in the chloroplast thylakoid membrane. Functionally, may help in the organization of the PsaE and PsaF subunits. The polypeptide is Photosystem I reaction center subunit IX (Chlorokybus atmophyticus (Soil alga)).